The primary structure comprises 214 residues: Alkaline phosphatase-like protein (214 aa).

Helical transmembrane passes span 3-23 (EIII…LIMI), 48-68 (LGII…ALIL), 141-161 (FLIL…SLGA), and 177-197 (YSSV…LLFV).

Belongs to the DedA family.

Its subcellular location is the cell membrane. The polypeptide is Alkaline phosphatase-like protein (apl) (Lactococcus lactis subsp. cremoris (strain MG1363)).